The sequence spans 243 residues: Uridylate kinase (243 aa).

12–15 (KLSG) lines the ATP pocket. Glycine 54 is a binding site for UMP. 2 residues coordinate ATP: glycine 55 and arginine 59. 135-142 (TGNPYFTT) contacts UMP. Residues asparagine 163, tyrosine 169, and aspartate 172 each coordinate ATP.

Belongs to the UMP kinase family. As to quaternary structure, homohexamer.

Its subcellular location is the cytoplasm. It carries out the reaction UMP + ATP = UDP + ADP. It functions in the pathway pyrimidine metabolism; CTP biosynthesis via de novo pathway; UDP from UMP (UMPK route): step 1/1. Its activity is regulated as follows. Inhibited by UTP. In terms of biological role, catalyzes the reversible phosphorylation of UMP to UDP. The chain is Uridylate kinase from Roseiflexus sp. (strain RS-1).